A 399-amino-acid chain; its full sequence is F-box protein At1g10110 (399 aa).

The F-box domain occupies 9–56; it reads PNWSELVTDILSLVFKHLSFTDFARAKTVCSSWYFASKSSSPRKNHTP.

The polypeptide is F-box protein At1g10110 (Arabidopsis thaliana (Mouse-ear cress)).